A 488-amino-acid chain; its full sequence is Photosystem II CP43 reaction center protein (488 aa).

The propeptide occupies 1–29 (MTKVFALGWLLKINLMKTLYSLRRFYHVE). The next 5 membrane-spanning stretches (helical) occupy residues 84–108 (LFEV…PHLA), 149–170 (LIGP…RDKN), 193–215 (KALF…RFVS), 270–290 (KPFA…LSYS), and 306–327 (WYNN…ASQA). E382 lines the [CaMn4O5] cluster pocket. Residues 462-486 (RARAAAAGFEKGINRENEPVLSMRP) traverse the membrane as a helical segment.

This sequence belongs to the PsbB/PsbC family. PsbC subfamily. In terms of assembly, PSII is composed of 1 copy each of membrane proteins PsbA, PsbB, PsbC, PsbD, PsbE, PsbF, PsbH, PsbI, PsbJ, PsbK, PsbL, PsbM, PsbT, PsbX, PsbY, PsbZ, Psb30/Ycf12, at least 3 peripheral proteins of the oxygen-evolving complex and a large number of cofactors. It forms dimeric complexes. Binds multiple chlorophylls and provides some of the ligands for the Ca-4Mn-5O cluster of the oxygen-evolving complex. It may also provide a ligand for a Cl- that is required for oxygen evolution. PSII binds additional chlorophylls, carotenoids and specific lipids. is required as a cofactor.

The protein resides in the plastid. Its subcellular location is the chloroplast thylakoid membrane. In terms of biological role, one of the components of the core complex of photosystem II (PSII). It binds chlorophyll and helps catalyze the primary light-induced photochemical processes of PSII. PSII is a light-driven water:plastoquinone oxidoreductase, using light energy to abstract electrons from H(2)O, generating O(2) and a proton gradient subsequently used for ATP formation. This is Photosystem II CP43 reaction center protein from Pyropia yezoensis (Susabi-nori).